The chain runs to 52 residues: Conotoxin Cal9.2d (52 aa).

A propeptide spanning residues 1–6 is cleaved from the precursor; the sequence is KRGVTL. Cystine bridges form between cysteine 14-cysteine 31, cysteine 19-cysteine 41, and cysteine 21-cysteine 46.

As to expression, expressed by the venom duct.

Its subcellular location is the secreted. Its function is as follows. Probable neurotoxin with unknown target. Possibly targets ion channels. This Californiconus californicus (California cone) protein is Conotoxin Cal9.2d.